We begin with the raw amino-acid sequence, 125 residues long: Period circadian protein (125 aa).

A disordered region spans residues 1–125 (EGSGGSGSSG…VTLTESLLNK (125 aa)). A run of 3 repeats spans residues 30–31 (GT), 33–34 (GT), and 35–36 (GT). Residues 30 to 84 (GTGGTGTNTGTNTGTGTGTGTGTGTGTGTGTGTGTGTGTGTGTGTGTGKGAGAGT) are compositionally biased toward gly residues. Residues 30-86 (GTGGTGTNTGTNTGTGTGTGTGTGTGTGTGTGTGTGTGTGTGTGTGTGKGAGAGTGT) are 28 X 2 AA approximate tandem repeats of G-[TA]. The 4; approximate repeat unit spans residues 37-38 (NT). Copy 5 of the repeat occupies 39-40 (GT). Residues 41–42 (NT) form a 6; approximate repeat. Repeat copies occupy residues 43 to 44 (GT), 45 to 46 (GT), 47 to 48 (GT), 49 to 50 (GT), 51 to 52 (GT), 53 to 54 (GT), 55 to 56 (GT), 57 to 58 (GT), 59 to 60 (GT), 61 to 62 (GT), 63 to 64 (GT), 65 to 66 (GT), 67 to 68 (GT), 69 to 70 (GT), 71 to 72 (GT), 73 to 74 (GT), and 75 to 76 (GT). Residues 77-78 (GK) form a 24; approximate repeat. 4 repeat units span residues 79–80 (GA), 81–82 (GA), 83–84 (GT), and 85–86 (GT). The segment covering 85-112 (GTATNETAGPGTTTTTTTRSTTTAATAA) has biased composition (low complexity). Over residues 116 to 125 (VTLTESLLNK) the composition is skewed to polar residues.

As to quaternary structure, forms a heterodimer with timeless (TIM); the complex then translocates into the nucleus. Phosphorylated with a circadian rhythmicity, probably by the double-time protein (dbt). Phosphorylation could be implicated in the stability of per monomer and in the formation of heterodimer per-tim.

The protein localises to the nucleus. Its subcellular location is the cytoplasm. The protein resides in the perinuclear region. Functionally, essential for biological clock functions. Determines the period length of circadian and ultradian rhythms; an increase in PER dosage leads to shortened circadian rhythms and a decrease leads to lengthened circadian rhythms. Essential for the circadian rhythmicity of locomotor activity, eclosion behavior, and for the rhythmic component of the male courtship song that originates in the thoracic nervous system. The biological cycle depends on the rhythmic formation and nuclear localization of the TIM-PER complex. Light induces the degradation of TIM, which promotes elimination of PER. Nuclear activity of the heterodimer coordinatively regulates PER and TIM transcription through a negative feedback loop. Behaves as a negative element in circadian transcriptional loop. Does not appear to bind DNA, suggesting indirect transcriptional inhibition. This is Period circadian protein (per) from Drosophila ananassae (Fruit fly).